We begin with the raw amino-acid sequence, 218 residues long: Glutathione S-transferase class-mu 26 kDa isozyme (218 aa).

Residues 2–83 enclose the GST N-terminal domain; it reads SPILGYWKIK…YIADKHNMLG (82 aa). Residues 7-8, 41-45, 54-55, and 67-68 each bind glutathione; these read YW, WRNKK, NL, and QS. A GST C-terminal domain is found at 85–203; that stretch reads CPKERAEISM…KSSKYIAWPL (119 aa). Tyr-111 lines the substrate pocket.

Belongs to the GST superfamily. Mu family. As to quaternary structure, homodimer.

The catalysed reaction is RX + glutathione = an S-substituted glutathione + a halide anion + H(+). Functionally, conjugation of reduced glutathione to a wide number of exogenous and endogenous hydrophobic electrophiles. GST isoenzymes appear to play a central role in the parasite detoxification system. Other functions are also suspected including a role in increasing the solubility of haematin in the parasite gut. In Schistosoma japonicum (Blood fluke), this protein is Glutathione S-transferase class-mu 26 kDa isozyme.